Here is a 208-residue protein sequence, read N- to C-terminus: MLEIGLTGGIGSGKTRVADMFAARGAAIIDTDLLAHEITAPGGQAIPALVEAFGPQCLRPDGAMDRDAMRAVVFADPAAKARLEGITHPLIRELTTSRAAEIAHAGEHPYLIYVVPLLVESGAWLNRVGRVLVVDCSEDTQIARVMSRNGFSREQVLAIMAKQATRAQRLAVAHDVIDNDGPVEALTAQVDQLDRTYRALSAAGVTQA.

Positions glutamate 3–alanine 208 constitute a DPCK domain. Glycine 11–arginine 16 lines the ATP pocket.

The protein belongs to the CoaE family.

It is found in the cytoplasm. It carries out the reaction 3'-dephospho-CoA + ATP = ADP + CoA + H(+). The protein operates within cofactor biosynthesis; coenzyme A biosynthesis; CoA from (R)-pantothenate: step 5/5. Functionally, catalyzes the phosphorylation of the 3'-hydroxyl group of dephosphocoenzyme A to form coenzyme A. The protein is Dephospho-CoA kinase of Cupriavidus pinatubonensis (strain JMP 134 / LMG 1197) (Cupriavidus necator (strain JMP 134)).